A 214-amino-acid chain; its full sequence is Ornithine decarboxylase antizyme 1 (214 aa).

It belongs to the ODC antizyme family. Interacts with ODC1 and thereby sterically blocks ODC homodimerization.

Functionally, ornithine decarboxylase (ODC) antizyme protein that negatively regulates ODC activity and intracellular polyamine biosynthesis and uptake in response to increased intracellular polyamine levels. Binds to ODC monomers, inhibiting the assembly of the functional ODC homodimer, and targets the monomers for ubiquitin-independent proteolytic destruction by the 26S proteasome. This is Ornithine decarboxylase antizyme 1 (oaz1a) from Danio rerio (Zebrafish).